A 251-amino-acid chain; its full sequence is Octanoyltransferase (251 aa).

The 223-residue stretch at 29-251 (AATPNSLWIC…GQKLSSYLAP (223 aa)) folds into the BPL/LPL catalytic domain. 68–75 (RGGQVTYH) serves as a coordination point for substrate. The tract at residues 137–174 (ARLRPSPQPSPKGRGSSTPVLLPPLPGEGGGGGGPDPD) is disordered. Substrate is bound by residues 184–186 (ALG) and 197–199 (GVA). The active-site Acyl-thioester intermediate is the C215.

This sequence belongs to the LipB family.

It is found in the cytoplasm. It catalyses the reaction octanoyl-[ACP] + L-lysyl-[protein] = N(6)-octanoyl-L-lysyl-[protein] + holo-[ACP] + H(+). Its pathway is protein modification; protein lipoylation via endogenous pathway; protein N(6)-(lipoyl)lysine from octanoyl-[acyl-carrier-protein]: step 1/2. In terms of biological role, catalyzes the transfer of endogenously produced octanoic acid from octanoyl-acyl-carrier-protein onto the lipoyl domains of lipoate-dependent enzymes. Lipoyl-ACP can also act as a substrate although octanoyl-ACP is likely to be the physiological substrate. In Polaromonas sp. (strain JS666 / ATCC BAA-500), this protein is Octanoyltransferase.